The primary structure comprises 637 residues: Extracellular metalloproteinase MEP (637 aa).

Residues 1-21 (MRSVDSLLLLGLTGLASQANA) form the signal peptide. Positions 22 to 246 (HPAKRQPNDS…VVGVVDYVAD (225 aa)) are excised as a propeptide. The N-linked (GlcNAc...) asparagine glycan is linked to N288. H431 is a binding site for Zn(2+). Residue E432 is part of the active site. Residue H435 participates in Zn(2+) binding.

Belongs to the peptidase M36 family. Zn(2+) is required as a cofactor.

Its subcellular location is the secreted. Its function is as follows. Secreted metalloproteinase that probably acts as a virulence factor. Cleaves Z.mays Endochitinase A (CHIA) between residues 'Gly-29' and 'Cys-30'. The protein is Extracellular metalloproteinase MEP (MEP) of Fusarium vanettenii (strain ATCC MYA-4622 / CBS 123669 / FGSC 9596 / NRRL 45880 / 77-13-4) (Fusarium solani subsp. pisi).